The sequence spans 267 residues: Glucosamine-6-phosphate deaminase (267 aa).

The active-site Proton acceptor; for enolization step is the D72. The active-site For ring-opening step is the D141. H143 functions as the Proton acceptor; for ring-opening step in the catalytic mechanism. E148 functions as the For ring-opening step in the catalytic mechanism.

Belongs to the glucosamine/galactosamine-6-phosphate isomerase family. NagB subfamily.

It catalyses the reaction alpha-D-glucosamine 6-phosphate + H2O = beta-D-fructose 6-phosphate + NH4(+). It participates in amino-sugar metabolism; N-acetylneuraminate degradation; D-fructose 6-phosphate from N-acetylneuraminate: step 5/5. With respect to regulation, allosterically activated by N-acetylglucosamine 6-phosphate (GlcNAc6P). Its function is as follows. Catalyzes the reversible isomerization-deamination of glucosamine 6-phosphate (GlcN6P) to form fructose 6-phosphate (Fru6P) and ammonium ion. This is Glucosamine-6-phosphate deaminase from Borrelia hermsii (strain HS1 / DAH).